A 1925-amino-acid polypeptide reads, in one-letter code: Plexin-D1 (1925 aa).

The span at 1-18 (MAPRAAGGAPLSARAAAA) shows a compositional bias: low complexity. The segment at 1–23 (MAPRAAGGAPLSARAAAASPPPF) is disordered. Positions 1-46 (MAPRAAGGAPLSARAAAASPPPFQTPPRCPVPLLLLLLLGAARAGA) are cleaved as a signal peptide. A Sema domain is found at 47-546 (LEIQRRFPSP…TSHQMARVKV (500 aa)). The Extracellular portion of the chain corresponds to 47–1271 (LEIQRRFPSP…TLQLGGSETA (1225 aa)). Asn86 carries N-linked (GlcNAc...) asparagine glycosylation. 2 cysteine pairs are disulfide-bonded: Cys104–Cys114 and Cys140–Cys148. Residues Asn155, Asn188, and Asn224 are each glycosylated (N-linked (GlcNAc...) asparagine). 2 cysteine pairs are disulfide-bonded: Cys322-Cys445 and Cys345-Cys389. 2 N-linked (GlcNAc...) asparagine glycosylation sites follow: Asn481 and Asn500. Disulfide bonds link Cys549-Cys566, Cys555-Cys600, Cys558-Cys575, Cys569-Cys581, and Cys637-Cys661. Residue Asn583 is glycosylated (N-linked (GlcNAc...) asparagine). 11 N-linked (GlcNAc...) asparagine glycosylation sites follow: Asn696, Asn736, Asn802, Asn965, Asn1017, Asn1060, Asn1099, Asn1118, Asn1132, Asn1237, and Asn1257. IPT/TIG domains follow at residues 891 to 979 (PEIH…FSYV), 981 to 1066 (PLVH…FWYM), and 1069 to 1160 (PVIT…LDPE). Residues 1272-1292 (IIVSIVICSVLLLLSVVALFV) traverse the membrane as a helical segment. Residues 1293-1925 (FCTKSRRAER…DNIYECYSEA (633 aa)) lie on the Cytoplasmic side of the membrane.

The protein belongs to the plexin family. In terms of assembly, interacts with NRP1 and SEMA4A. Interacts with SH3BP1; they dissociate upon SEMA3E binding to PLXND1 allowing SH3BP1 to transduce downstream signal through RAC1 inactivation. In terms of tissue distribution, detected at low levels in heart, placenta, lung, skeletal muscle, kidney, thymus and liver. Detected at very low levels in brain, colon, spleen, small intestine and peripheral blood leukocytes.

It is found in the cell membrane. Its subcellular location is the cell projection. It localises to the lamellipodium membrane. Functionally, cell surface receptor for SEMA4A and for class 3 semaphorins, such as SEMA3A, SEMA3C and SEMA3E. Plays an important role in cell-cell signaling, and in regulating the migration of a wide spectrum of cell types. Regulates the migration of thymocytes in the medulla. Regulates endothelial cell migration. Plays an important role in ensuring the specificity of synapse formation. Required for normal development of the heart and vasculature. Mediates anti-angiogenic signaling in response to SEMA3E. In Homo sapiens (Human), this protein is Plexin-D1 (PLXND1).